A 962-amino-acid chain; its full sequence is Protease 3 (962 aa).

The signal sequence occupies residues Met1–Ala23. Residue His88 coordinates Zn(2+). Residue Glu91 is the Proton acceptor of the active site. Zn(2+) contacts are provided by His92 and Glu169.

The protein belongs to the peptidase M16 family. In terms of assembly, monomer. Requires Zn(2+) as cofactor.

The protein resides in the periplasm. It catalyses the reaction Preferential cleavage of 16-Tyr-|-Leu-17 and 25-Phe-|-Tyr-26 bonds of oxidized insulin B chain. Also acts on other substrates of Mw less than 7 kDa such as insulin and glucagon.. Endopeptidase that degrades small peptides of less than 7 kDa, such as glucagon and insulin. The sequence is that of Protease 3 (ptrA) from Salmonella typhi.